The sequence spans 83 residues: Sec-independent protein translocase protein TatA (83 aa).

A helical transmembrane segment spans residues M1 to G21. The disordered stretch occupies residues K34–Q83. Positions T66–Q75 are enriched in pro residues.

It belongs to the TatA/E family. As to quaternary structure, the Tat system comprises two distinct complexes: a TatABC complex, containing multiple copies of TatA, TatB and TatC subunits, and a separate TatA complex, containing only TatA subunits. Substrates initially bind to the TatABC complex, which probably triggers association of the separate TatA complex to form the active translocon.

It is found in the cell inner membrane. Part of the twin-arginine translocation (Tat) system that transports large folded proteins containing a characteristic twin-arginine motif in their signal peptide across membranes. TatA could form the protein-conducting channel of the Tat system. The sequence is that of Sec-independent protein translocase protein TatA from Novosphingobium aromaticivorans (strain ATCC 700278 / DSM 12444 / CCUG 56034 / CIP 105152 / NBRC 16084 / F199).